We begin with the raw amino-acid sequence, 263 residues long: Leucyl/phenylalanyl-tRNA--protein transferase (263 aa).

Belongs to the L/F-transferase family.

Its subcellular location is the cytoplasm. It carries out the reaction N-terminal L-lysyl-[protein] + L-leucyl-tRNA(Leu) = N-terminal L-leucyl-L-lysyl-[protein] + tRNA(Leu) + H(+). The enzyme catalyses N-terminal L-arginyl-[protein] + L-leucyl-tRNA(Leu) = N-terminal L-leucyl-L-arginyl-[protein] + tRNA(Leu) + H(+). The catalysed reaction is L-phenylalanyl-tRNA(Phe) + an N-terminal L-alpha-aminoacyl-[protein] = an N-terminal L-phenylalanyl-L-alpha-aminoacyl-[protein] + tRNA(Phe). Its function is as follows. Functions in the N-end rule pathway of protein degradation where it conjugates Leu, Phe and, less efficiently, Met from aminoacyl-tRNAs to the N-termini of proteins containing an N-terminal arginine or lysine. This is Leucyl/phenylalanyl-tRNA--protein transferase from Novosphingobium aromaticivorans (strain ATCC 700278 / DSM 12444 / CCUG 56034 / CIP 105152 / NBRC 16084 / F199).